A 377-amino-acid polypeptide reads, in one-letter code: MAIKLKNRWLGVAIPAFLVALIGYGSHYFILSNFLSWNEQIFYQTCQTMIWVSYYLAIYTNPGIPPKDFKPSAEEWHNYCKKCRVYKPERAHHCKTCNQCVLAMDHHCPWTLNCVGHSNFPHFMRFLFWVIFSTAYLLFLLIGRIYLLWSIRHTAFHHRSTSEIIFICIMTPMDAFVLLTVSSLLGRCIYNQCLHGMTQIESWEMDRIQSLHYKNRLLAQVIDRLVERRPEILPAKQHEINKLLSKRYVNQEDFTNFPYDVNPWTNINNAMGPWYLWLWPWSKPPTIGTSFAKNELFFYDPNSSIEDMLMSLPWPPDGLTHHSRALGSGSSIETIVSGGEQVIRDKSVDLRDRLGRNSWYNDWGEDLSDFGVDTELE.

Topologically, residues 1 to 9 (MAIKLKNRW) are cytoplasmic. A helical membrane pass occupies residues 10 to 30 (LGVAIPAFLVALIGYGSHYFI). Residues 31–122 (LSNFLSWNEQ…NCVGHSNFPH (92 aa)) are Lumenal-facing. In terms of domain architecture, DHHC spans 78–128 (NYCKKCRVYKPERAHHCKTCNQCVLAMDHHCPWTLNCVGHSNFPHFMRFLF). Cys-108 functions as the S-palmitoyl cysteine intermediate in the catalytic mechanism. A helical membrane pass occupies residues 123–143 (FMRFLFWVIFSTAYLLFLLIG). At 144–163 (RIYLLWSIRHTAFHHRSTSE) the chain is on the cytoplasmic side. The helical transmembrane segment at 164–184 (IIFICIMTPMDAFVLLTVSSL) threads the bilayer. Topologically, residues 185–377 (LGRCIYNQCL…SDFGVDTELE (193 aa)) are lumenal.

Belongs to the DHHC palmitoyltransferase family. PFA4 subfamily.

It localises to the endoplasmic reticulum membrane. It catalyses the reaction L-cysteinyl-[protein] + hexadecanoyl-CoA = S-hexadecanoyl-L-cysteinyl-[protein] + CoA. Functionally, mediates the reversible addition of palmitate to target proteins, thereby regulating their membrane association and biological function. In Kluyveromyces lactis (strain ATCC 8585 / CBS 2359 / DSM 70799 / NBRC 1267 / NRRL Y-1140 / WM37) (Yeast), this protein is Palmitoyltransferase PFA4.